The primary structure comprises 720 residues: Chloroplastic group IIA intron splicing facilitator CRS1, chloroplastic (720 aa).

The transit peptide at 1–77 (MRNGINILSY…DQFRENRGVS (77 aa)) directs the protein to the chloroplast. The stretch at 131–159 (KAMKKIVRNVEKLDEDSDSEETQMDDLSE) forms a coiled coil. 2 consecutive CRM domains span residues 205–301 (LILD…EGQD) and 359–456 (AKLT…EVAD). 2 coiled-coil regions span residues 447-477 (KDFLSDEVADLVEDRERLLSRYQHFEETKRE) and 517-553 (RNLETEAEKARLEKELKSQEHKLSILKSKIEKSNMEL). The CRM 3 domain maps to 570–670 (EILTNEEREC…KNYKRPSSKL (101 aa)).

As to quaternary structure, homodimer. Interacts with RNA. Part of large ribonucleo-protein complexes that include group IIA introns and CRS1.

It is found in the plastid. It localises to the chloroplast stroma. In terms of biological role, required for the splicing of group IIA introns in chloroplasts, by regulating the intron folding. Forms splicing particles with RNA. May also be involved in chloroplast protein translation. This Arabidopsis thaliana (Mouse-ear cress) protein is Chloroplastic group IIA intron splicing facilitator CRS1, chloroplastic.